A 162-amino-acid polypeptide reads, in one-letter code: UPF0305 protein MmarC6_0221 (162 aa).

The protein belongs to the UPF0305 family.

This chain is UPF0305 protein MmarC6_0221, found in Methanococcus maripaludis (strain C6 / ATCC BAA-1332).